The chain runs to 228 residues: Ion-translocating oxidoreductase complex subunit G (228 aa).

The chain crosses the membrane as a helical span at residues 35-55 (ALSLGLVCALVAVALLLGNQL). Residue threonine 197 is modified to FMN phosphoryl threonine.

The protein belongs to the RnfG family. The complex is composed of six subunits: RnfA, RnfB, RnfC, RnfD, RnfE and RnfG. The cofactor is FMN.

It is found in the cell inner membrane. Part of a membrane-bound complex that couples electron transfer with translocation of ions across the membrane. The protein is Ion-translocating oxidoreductase complex subunit G of Stutzerimonas stutzeri (Pseudomonas stutzeri).